The primary structure comprises 420 residues: Mannose-1-phosphate guanylyltransferase regulatory subunit alpha (420 aa).

The interval 2–251 (LKAVILIGGP…DGIWSQIKSA (250 aa)) is substrate-binding domain. Residues Glu85 and Gln247 each contribute to the GDP-alpha-D-mannose site. Residues 273–420 (LAKHTPGGPW…SRSFTNQIIL (148 aa)) are hexapeptide repeat domain. The interval 356–384 (TPSDPNPNDPRARMDSESLFKDGKLLPAI) is C-loop.

This sequence belongs to the transferase hexapeptide repeat family. As to quaternary structure, component of the GMPPA-GMPPB mannose-1-phosphate guanylyltransferase complex composed of 4 GMPPA subunits and 8 GMPPB subunits; the complex is organized into three layers, a central layer made up of 2 GMPPA dimers sandwiched between two layers each made up of 2 GMPPB dimers. As to expression, expressed in fibroblasts (at protein level).

It is found in the cytoplasm. Functionally, regulatory subunit of the GMPPA-GMPPB mannose-1-phosphate guanylyltransferase complex; reduces the catalytic activity of GMPPB when part of the complex. Mediates allosteric feedback inhibition of GMPPB catalytic activity upon binding GDP-alpha-D-mannose. Together with GMPPB regulates GDP-alpha-D-mannose levels. In Homo sapiens (Human), this protein is Mannose-1-phosphate guanylyltransferase regulatory subunit alpha.